The sequence spans 197 residues: Carbohydrate-binding domain-containing protein C2E1P3.05c (197 aa).

The first 23 residues, 1–23 (MLTQSLFLTVLTLALSLVSKTSA), serve as a signal peptide directing secretion. 2 CBM1 domains span residues 25–61 (QCSP…SQCI) and 68–104 (PCAK…SQCI). 4 disulfides stabilise this stretch: Cys33–Cys50, Cys44–Cys60, Cys76–Cys93, and Cys87–Cys103. Residues 115–163 (SSAASSTTSTTSSSSLVSSTTLTSSSPSAVSSTTSIPSISSTISSSVST) are disordered. Asn182 and Asn193 each carry an N-linked (GlcNAc...) asparagine glycan.

The protein localises to the secreted. The sequence is that of Carbohydrate-binding domain-containing protein C2E1P3.05c from Schizosaccharomyces pombe (strain 972 / ATCC 24843) (Fission yeast).